Consider the following 278-residue polypeptide: Phosphonates import ATP-binding protein PhnC 2 (278 aa).

One can recognise an ABC transporter domain in the interval 5 to 253; it reads IRVDSLNKTF…FLNELYGAEG (249 aa). 37 to 44 serves as a coordination point for ATP; it reads GASGSGKS.

The protein belongs to the ABC transporter superfamily. Phosphonates importer (TC 3.A.1.9.1) family. As to quaternary structure, the complex is composed of two ATP-binding proteins (PhnC), two transmembrane proteins (PhnE) and a solute-binding protein (PhnD).

The protein localises to the cell inner membrane. It catalyses the reaction phosphonate(out) + ATP + H2O = phosphonate(in) + ADP + phosphate + H(+). In terms of biological role, part of the ABC transporter complex PhnCDE involved in phosphonates import. Responsible for energy coupling to the transport system. The protein is Phosphonates import ATP-binding protein PhnC 2 of Pseudomonas aeruginosa (strain ATCC 15692 / DSM 22644 / CIP 104116 / JCM 14847 / LMG 12228 / 1C / PRS 101 / PAO1).